The sequence spans 132 residues: Agouti-signaling protein (132 aa).

The signal sequence occupies residues 1-22; that stretch reads MDVTRLLLATLLVFLCFFAAYS. An N-linked (GlcNAc...) asparagine glycan is attached at Asn-39. Residues 61–93 form a disordered region; the sequence is KISRKEAEKKRSSKKEASKQKVARPRTPLSVPC. The span at 64–79 shows a compositional bias: basic and acidic residues; that stretch reads RKEAEKKRSSKKEASK. Cystine bridges form between Cys-93–Cys-108, Cys-100–Cys-114, Cys-107–Cys-125, Cys-111–Cys-132, and Cys-116–Cys-123. Residues 93-132 form the Agouti domain; sequence CVSTRGSCKPPAPACCHPCASCQCRFFRSACSCRVLNVNC.

It is found in the secreted. In terms of biological role, involved in the regulation of melanogenesis. The binding of ASP to MC1R precludes alpha-MSH initiated signaling and thus blocks production of cAMP, leading to a down-regulation of eumelanogenesis (brown/black pigment) and thus increasing synthesis of pheomelanin (yellow/red pigment). This chain is Agouti-signaling protein (ASIP), found in Callithrix geoffroyi (Geoffroy's marmoset).